Reading from the N-terminus, the 275-residue chain is Small ribosomal subunit protein uS3 (275 aa).

One can recognise a KH type-2 domain in the interval 38–106 (IRKLLATGLE…QVQLNILEVK (69 aa)). Residues 215 to 275 (AAAAPASDRP…AEAPAESTES (61 aa)) form a disordered region. Residues 237–275 (SGSAGTTATSTEAGRAATSDAPAAGTAAAAEAPAESTES) are compositionally biased toward low complexity.

This sequence belongs to the universal ribosomal protein uS3 family. In terms of assembly, part of the 30S ribosomal subunit. Forms a tight complex with proteins S10 and S14.

In terms of biological role, binds the lower part of the 30S subunit head. Binds mRNA in the 70S ribosome, positioning it for translation. This chain is Small ribosomal subunit protein uS3, found in Mycolicibacterium smegmatis (strain ATCC 700084 / mc(2)155) (Mycobacterium smegmatis).